We begin with the raw amino-acid sequence, 239 residues long: MAKLKRSNDRKVTNYVHVTKGGNATVGIANSIGLPSGQGFSCPDATAFCAKVCYAGKLEKVRKAVSSVLLHNWELLRDADLTDTVTLLSEMVAEFVKDCDRRKAPKLFRIHWDGDFFSPTYVAAWGRVIRDNPDVQFWAYTRVQTAAVYLHSQRLDNLALYFSADPDNIDVARFLEDKGINIAYVDTTFAKGKAEFPTAVRCPENNKAIDLINDKGSACARCGLCVNGRRNVLFSTTKK.

This is Gene 88 protein (88) from Mycobacterium (Mycobacteriophage L5).